The primary structure comprises 121 residues: Basic phospholipase A2 3 (121 aa).

Cystine bridges form between Cys26/Cys115, Cys28/Cys44, Cys43/Cys95, Cys49/Cys121, Cys50/Cys88, Cys57/Cys81, and Cys75/Cys86. Tyr27, Gly29, and Gly31 together coordinate Ca(2+). Residue His47 is part of the active site. Asp48 is a binding site for Ca(2+). The active site involves Asp89.

This sequence belongs to the phospholipase A2 family. Group II subfamily. D49 sub-subfamily. The cofactor is Ca(2+). In terms of tissue distribution, expressed by the venom gland.

The protein resides in the secreted. The catalysed reaction is a 1,2-diacyl-sn-glycero-3-phosphocholine + H2O = a 1-acyl-sn-glycero-3-phosphocholine + a fatty acid + H(+). In terms of biological role, PLA2 catalyzes the calcium-dependent hydrolysis of the 2-acyl groups in 3-sn-phosphoglycerides. The chain is Basic phospholipase A2 3 from Daboia russelii (Russel's viper).